We begin with the raw amino-acid sequence, 224 residues long: MDVSAALSSDYSSGTPSPVAADADDGSSAYMTVSSAPPKRRAGRTKFKETRHPVFKGVRRRNPGRWVCEVREPHGKQRIWLGTFETAEMAARAHDVAALALRGRAACLNFADSPRRLRVPPIGASHDDIRRAAAEAAEAFRPPPDESNAATEVAAAASGATNSNAEQFASHPYYEVMDDGLDLGMQGYLDMAQGMLIDPPPMACDPAVGGGEDDNDGEVQLWSY.

Positions 1 to 16 (MDVSAALSSDYSSGTP) are enriched in polar residues. The disordered stretch occupies residues 1-46 (MDVSAALSSDYSSGTPSPVAADADDGSSAYMTVSSAPPKRRAGRTK). The segment at residues 54–111 (VFKGVRRRNPGRWVCEVREPHGKQRIWLGTFETAEMAARAHDVAALALRGRAACLNFA) is a DNA-binding region (AP2/ERF).

Belongs to the AP2/ERF transcription factor family. ERF subfamily.

Its subcellular location is the nucleus. Transcriptional activator that binds specifically to the DNA sequence 5'-[AG]CCGAC-3'. Binding to the C-repeat/DRE element mediates high salinity- and dehydration-inducible transcription. This chain is Dehydration-responsive element-binding protein 1G (DREB1G), found in Oryza sativa subsp. indica (Rice).